The chain runs to 591 residues: Putative BTB/POZ domain-containing protein At5g13600 (591 aa).

The BTB domain maps to 28 to 95 (PDVMIQVVDE…CYGVRIEVTP (68 aa)). The NPH3 domain maps to 208–493 (NWWFNDVSSF…VQVLFFEQMR (286 aa)). Residue Tyr434 is modified to Phosphotyrosine.

The protein belongs to the NPH3 family.

It functions in the pathway protein modification; protein ubiquitination. Its function is as follows. May act as a substrate-specific adapter of an E3 ubiquitin-protein ligase complex (CUL3-RBX1-BTB) which mediates the ubiquitination and subsequent proteasomal degradation of target proteins. The sequence is that of Putative BTB/POZ domain-containing protein At5g13600 from Arabidopsis thaliana (Mouse-ear cress).